The primary structure comprises 522 residues: Glucans biosynthesis protein G (522 aa).

An N-terminal signal peptide occupies residues 1–33; that stretch reads MLDNKFGFKQRVASLRWLSAAIMLSVSAVPAWA.

This sequence belongs to the OpgD/OpgG family.

Its subcellular location is the periplasm. It participates in glycan metabolism; osmoregulated periplasmic glucan (OPG) biosynthesis. Involved in the biosynthesis of osmoregulated periplasmic glucans (OPGs). In Pectobacterium atrosepticum (strain SCRI 1043 / ATCC BAA-672) (Erwinia carotovora subsp. atroseptica), this protein is Glucans biosynthesis protein G.